The following is a 333-amino-acid chain: Electron transfer flavoprotein subunit alpha, mitochondrial (333 aa).

The transit peptide at 1-19 (MFRAAAPGQLRRAASLLRF) directs the protein to the mitochondrion. Residues 20-204 (QSTLVIAEHA…GISEWLDQKL (185 aa)) are domain I. An N6-acetyllysine; alternate modification is found at K59. Position 59 is an N6-succinyllysine; alternate (K59). K62 bears the N6-acetyllysine mark. K69 bears the N6-acetyllysine; alternate mark. An N6-succinyllysine; alternate modification is found at K69. Position 75 is an N6-acetyllysine (K75). K85 bears the N6-acetyllysine; alternate mark. K85 is modified (N6-succinyllysine; alternate). A Phosphothreonine modification is found at T93. N6-acetyllysine occurs at positions 101 and 139. Phosphoserine is present on S140. K158 carries the N6-acetyllysine; alternate modification. The residue at position 158 (K158) is an N6-succinyllysine; alternate. K164 bears the N6-acetyllysine mark. An N6-succinyllysine modification is found at K187. K203 carries the post-translational modification N6-acetyllysine; alternate. Residue K203 is modified to N6-succinyllysine; alternate. The tract at residues 205-333 (TKSDRPELTG…PEMTEILKKK (129 aa)) is domain II. K216 is modified (N6-succinyllysine). R223 is a binding site for FAD. 2 positions are modified to N6-acetyllysine; alternate: K226 and K232. Residues K226 and K232 each carry the N6-succinyllysine; alternate modification. FAD contacts are provided by residues S248, 263 to 266 (VGQT), 281 to 286 (SGAIQH), and N300. K301 bears the N6-succinyllysine mark. FAD is bound at residue 318-319 (DL).

It belongs to the ETF alpha-subunit/FixB family. As to quaternary structure, heterodimer composed of ETFA and ETFB. Identified in a complex that contains ETFA, ETFB and ETFRF1. Interaction with ETFRF1 promotes dissociation of the bound FAD and loss of electron transfer activity. Interacts with TASOR. FAD is required as a cofactor. Expressed in the spermatogonia, spermatocytes, ovary and granular cells within the cerebellum.

The protein resides in the mitochondrion matrix. Heterodimeric electron transfer flavoprotein that accepts electrons from several mitochondrial dehydrogenases, including acyl-CoA dehydrogenases, glutaryl-CoA and sarcosine dehydrogenase. It transfers the electrons to the main mitochondrial respiratory chain via ETF-ubiquinone oxidoreductase (ETF dehydrogenase). Required for normal mitochondrial fatty acid oxidation and normal amino acid metabolism. The chain is Electron transfer flavoprotein subunit alpha, mitochondrial (Etfa) from Mus musculus (Mouse).